The chain runs to 413 residues: Peptidase T (413 aa).

H82 provides a ligand contact to Zn(2+). D84 is an active-site residue. Residue D144 coordinates Zn(2+). The active-site Proton acceptor is the E178. Residues E179, D201, and H383 each coordinate Zn(2+).

It belongs to the peptidase M20B family. In terms of assembly, homotrimer. It depends on Zn(2+) as a cofactor.

It is found in the cytoplasm. The catalysed reaction is Release of the N-terminal residue from a tripeptide.. Its activity is regulated as follows. Totally inhibited by EDTA, EGTA, and 1,10-phenanthroline. Strongly inhibited by divalent cations such as Cu(2+), Cd(2+), Co(2+) and Mn(2+). Partially inhibited by the reducing agents 2-mercaptoethanol and dithiothreitol. Cleaves the N-terminal amino acid of tripeptides. Shows broad substrate specificity, exhibiting maximum activity against hydrophobic tripeptides, with the highest activity for Met-Gly-Gly. Therefore this enzyme may play an important role in flavor formation during cheese ripening. Is also able to slowly hydrolyze some hydrophobic dipeptides, but displays no activity against tetrapeptides and the tripeptide Phe-Gly-Gly. This is Peptidase T (pepT) from Lactobacillus helveticus (Lactobacillus suntoryeus).